A 261-amino-acid polypeptide reads, in one-letter code: MLTIADRSFQSHLIMGTGGASSFDTLEKSLIASGTELTTVAMRRHAAHTGAHGESVFELMQRLNITPLPNTAGCRTARDAILTAQLAREALDTSWIKVEVIADDTTLLPDVLELIDATETLTNDGFTVLAYTSDDPVVAQRLEDAGAAAVMPLGSPIGTGLGILNPHNIELICSRATVPVLLDAGIGTASDATLAMELGCSGVLLASAINRCINPITMATAMKHAVEAGRLAREAGRIPRREHAVASSSFEGLASWADEVL.

Lys97 functions as the Schiff-base intermediate with DXP in the catalytic mechanism. 1-deoxy-D-xylulose 5-phosphate-binding positions include Gly158, 184–185 (AG), and 206–207 (AS).

It belongs to the ThiG family. In terms of assembly, homotetramer. Forms heterodimers with either ThiH or ThiS.

Its subcellular location is the cytoplasm. The catalysed reaction is [ThiS sulfur-carrier protein]-C-terminal-Gly-aminoethanethioate + 2-iminoacetate + 1-deoxy-D-xylulose 5-phosphate = [ThiS sulfur-carrier protein]-C-terminal Gly-Gly + 2-[(2R,5Z)-2-carboxy-4-methylthiazol-5(2H)-ylidene]ethyl phosphate + 2 H2O + H(+). It participates in cofactor biosynthesis; thiamine diphosphate biosynthesis. Catalyzes the rearrangement of 1-deoxy-D-xylulose 5-phosphate (DXP) to produce the thiazole phosphate moiety of thiamine. Sulfur is provided by the thiocarboxylate moiety of the carrier protein ThiS. In vitro, sulfur can be provided by H(2)S. This Corynebacterium diphtheriae (strain ATCC 700971 / NCTC 13129 / Biotype gravis) protein is Thiazole synthase.